A 193-amino-acid chain; its full sequence is Interleukin-18-binding protein (193 aa).

A signal peptide spans 1-28 (MTMRHCWTAGPSSWWVLLLYVHVILARA). One can recognise an Ig-like C2-type domain in the interval 60–161 (PALDVIWPEK…QVAQYHIILA (102 aa)). Asn74, Asn98, Asn120, and Asn142 each carry an N-linked (GlcNAc...) asparagine glycan. The cysteines at positions 81 and 145 are disulfide-linked. Residues 172 to 185 (SPSQETLSSHSPVS) show a composition bias toward polar residues. The interval 172 to 193 (SPSQETLSSHSPVSRSAGPGVA) is disordered.

It localises to the secreted. Binds to IL-18 and inhibits its activity. Functions as an inhibitor of the early TH1 cytokine response. This is Interleukin-18-binding protein (Il18bp) from Mus musculus (Mouse).